Here is a 525-residue protein sequence, read N- to C-terminus: Protein translocase subunit SecD (525 aa).

Helical transmembrane passes span 9 to 29 (LYLVVLVALGSIYYALPSLLG), 368 to 388 (VLIGGVLVVLFMVLYYKGFGM), 392 to 412 (LAVVLNVTILVSLLALMQATL), 415 to 435 (PGIAGAVLLLGMAVDANVLIF), 460 to 480 (FSTILDANITTLITAVILYQF), and 487 to 507 (GFAVTLSVGLLASMFTAIFVT).

Belongs to the SecD/SecF family. SecD subfamily. Forms a complex with SecF. Part of the essential Sec protein translocation apparatus which comprises SecA, SecYEG and auxiliary proteins SecDF-YajC and YidC.

It localises to the cell inner membrane. Part of the Sec protein translocase complex. Interacts with the SecYEG preprotein conducting channel. SecDF uses the proton motive force (PMF) to complete protein translocation after the ATP-dependent function of SecA. The chain is Protein translocase subunit SecD from Magnetococcus marinus (strain ATCC BAA-1437 / JCM 17883 / MC-1).